The chain runs to 119 residues: Chorion class CA protein ERA.1 (119 aa).

A signal peptide spans methionine 1–serine 21. Residues glutamine 22–glycine 55 are left arm. The central domain stretch occupies residues glycine 56–isoleucine 103. The segment at serine 104–tyrosine 119 is right arm.

The protein belongs to the chorion protein family.

This protein is one of many from the eggshell of the silk moth. The protein is Chorion class CA protein ERA.1 (ERA.1) of Bombyx mori (Silk moth).